The following is a 446-amino-acid chain: MSDYLSVSTLTKYLKLKFDKDPYLERVYLTGQVSNFRRRPNHQYFSLKDDKSVIQATMWSGQFKKLGFELEEGMKVNVVGRVQLYEPSGSYSIIVEKAEPDGIGALAIQFEQLKKKLSQSGYFDDRHKQLIPQFVRKIGVVTSPSGAVIRDIITTVSRRFPGVEILLFPTKVQGEGAAQEIAQTIALANEKKDLDLLIVGRGGGSIEDLWAFNEECVVEAIFESRLPVISSVGHETDTTLADFVADRRAATPTAAAELATPVTKIDILSWITERENRMYQSSLRLIRTKEERLQKSKQSVIFRQPERLYDGFLQKLDNLNQQLTYSMRDKLQTVRQKQGLLHQKLQGIDLKQRIHIYQERVVQSRRLLSSTMTSQYDSKLARFEKAQDALISLDSSRIVARGYAIIEKNHTLVSTTNGINEGDHLQVKMQDGLLEVEVKDVRQENI.

This sequence belongs to the XseA family. As to quaternary structure, heterooligomer composed of large and small subunits.

The protein localises to the cytoplasm. The enzyme catalyses Exonucleolytic cleavage in either 5'- to 3'- or 3'- to 5'-direction to yield nucleoside 5'-phosphates.. In terms of biological role, bidirectionally degrades single-stranded DNA into large acid-insoluble oligonucleotides, which are then degraded further into small acid-soluble oligonucleotides. This Streptococcus agalactiae serotype III (strain NEM316) protein is Exodeoxyribonuclease 7 large subunit.